Reading from the N-terminus, the 525-residue chain is Neuropilin and tolloid-like protein 2 (525 aa).

The signal sequence occupies residues 1–22 (MALEQLCAVLKVLLITVLVVEG). The Extracellular segment spans residues 23 to 347 (IAVAQKTQDG…GLFEQITKTH (325 aa)). 7 cysteine pairs are disulfide-bonded: Cys45–Cys72, Cys100–Cys122, Cys177–Cys207, Cys234–Cys256, Cys297–Cys309, Cys304–Cys322, and Cys316–Cys331. CUB domains lie at 45-159 (CGIW…YSFI) and 177-292 (CQFE…FTSF). Positions 296–332 (PCTSSTFFCHSNMCINNSLVCNGVQNCAYPWDENHCK) constitute an LDL-receptor class A domain. Asn311 carries an N-linked (GlcNAc...) asparagine glycan. Residues 348–368 (GTIIGITSGIVLVLLIISILV) traverse the membrane as a helical segment. At 369–525 (QVKQPRKKVM…SAQASISIDF (157 aa)) the chain is on the cytoplasmic side. Ser409 is subject to Phosphoserine.

In terms of assembly, interacts with GRIK2 and GRIK3, but neither with AMPA-nor with NMDA-sensitive glutamate receptors. N-glycosylated. In terms of tissue distribution, expressed in brain tissues, including cerebellar granule cells (at protein level).

Its subcellular location is the cell membrane. In terms of biological role, accessory subunit of neuronal kainate-sensitive glutamate receptors, GRIK2 and GRIK3. Increases kainate-receptor channel activity, slowing the decay kinetics of the receptors, without affecting their expression at the cell surface, and increasing the open probability of the receptor channels. Modulates the agonist sensitivity of kainate receptors. Slows the decay of kainate receptor-mediated excitatory postsynaptic currents (EPSCs), thus directly influencing synaptic transmission. This Mus musculus (Mouse) protein is Neuropilin and tolloid-like protein 2 (Neto2).